A 166-amino-acid chain; its full sequence is Ribosome maturation factor RimM (166 aa).

Positions 91-163 (EDEFYEFQLI…KMQITPPEGW (73 aa)) constitute a PRC barrel domain.

It belongs to the RimM family. Binds ribosomal protein uS19.

The protein resides in the cytoplasm. Its function is as follows. An accessory protein needed during the final step in the assembly of 30S ribosomal subunit, possibly for assembly of the head region. Essential for efficient processing of 16S rRNA. May be needed both before and after RbfA during the maturation of 16S rRNA. It has affinity for free ribosomal 30S subunits but not for 70S ribosomes. The polypeptide is Ribosome maturation factor RimM (Sulfurihydrogenibium sp. (strain YO3AOP1)).